Here is a 145-residue protein sequence, read N- to C-terminus: Basic phospholipase A2 S2-22 (145 aa).

The first 19 residues, 1-19 (MYPAHLLVLLAVCVSLLGA), serve as a signal peptide directing secretion. The propeptide occupies 20 to 27 (SDIPPQPL). 7 disulfides stabilise this stretch: cysteine 38–cysteine 99, cysteine 54–cysteine 144, cysteine 56–cysteine 72, cysteine 71–cysteine 127, cysteine 78–cysteine 120, cysteine 88–cysteine 113, and cysteine 106–cysteine 118. 3 residues coordinate Ca(2+): tyrosine 55, glycine 57, and glycine 59. Histidine 75 is a catalytic residue. Aspartate 76 provides a ligand contact to Ca(2+). Residue aspartate 121 is part of the active site.

This sequence belongs to the phospholipase A2 family. Group I subfamily. D49 sub-subfamily. Ca(2+) is required as a cofactor. Expressed by the venom gland.

It localises to the secreted. The enzyme catalyses a 1,2-diacyl-sn-glycero-3-phosphocholine + H2O = a 1-acyl-sn-glycero-3-phosphocholine + a fatty acid + H(+). Snake venom phospholipase A2 (PLA2) that inhibits collagen-induced platelet aggregation. PLA2 catalyzes the calcium-dependent hydrolysis of the 2-acyl groups in 3-sn-phosphoglycerides. This chain is Basic phospholipase A2 S2-22, found in Austrelaps superbus (Lowland copperhead snake).